A 1168-amino-acid polypeptide reads, in one-letter code: Carbamoyl phosphate synthase arginine-specific large chain, mitochondrial (1168 aa).

The N-terminal 51 residues, 1 to 51 (MLSTVHKAGRAPALLRHGRRVPVQASQLRALTSGAQNTSIFQTQANAAQRL), are a transit peptide targeting the mitochondrion. Residues 86 to 483 (RDHVDVKKVL…SFQKAIRQVD (398 aa)) are carboxyphosphate synthetic domain. ATP-binding positions include Arg-213, 243-298 (ANKI…WKEV), Arg-253, Gly-259, Gly-260, Lys-290, Leu-292, Glu-297, Gly-323, Ile-324, His-325, Gln-366, and Glu-380. Residues 217 to 409 (AKALEEINIP…LAYTAAKIGL (193 aa)) form the ATP-grasp 1 domain. Mg(2+) contacts are provided by Gln-366, Glu-380, and Asn-382. Gln-366, Glu-380, and Asn-382 together coordinate Mn(2+). Residues 484–628 (PRFVGFQGDK…YTTYNASSHD (145 aa)) form an oligomerization domain region. Residues 629-1017 (VTFEDKGTVI…AYWASLQSAM (389 aa)) form a carbamoyl phosphate synthetic domain region. One can recognise an ATP-grasp 2 domain in the interval 754–951 (SEILDSIGVD…FIDAATKALV (198 aa)). ATP contacts are provided by residues 780–837 (AEEV…AQEI), Arg-790, Lys-829, Ile-831, Glu-836, Gly-861, Val-862, His-863, Ser-864, Gln-904, and Glu-922. Mg(2+)-binding residues include Gln-904, Glu-922, and Asn-924. Residues Gln-904, Glu-922, and Asn-924 each contribute to the Mn(2+) site. The tract at residues 1018-1152 (NFRVPEPGEG…AEKLPRPEGI (135 aa)) is allosteric domain. Positions 1019 to 1168 (FRVPEPGEGL…WSEFIGGKPL (150 aa)) constitute an MGS-like domain.

Belongs to the CarB family. In terms of assembly, heterodimer composed of 2 chains; the small (or glutamine) chain promotes the hydrolysis of glutamine to ammonia, which is used by the large (or ammonia) chain to synthesize carbamoyl phosphate. The cofactor is Mg(2+). Mn(2+) is required as a cofactor.

The protein resides in the mitochondrion matrix. The catalysed reaction is hydrogencarbonate + L-glutamine + 2 ATP + H2O = carbamoyl phosphate + L-glutamate + 2 ADP + phosphate + 2 H(+). It catalyses the reaction hydrogencarbonate + NH4(+) + 2 ATP = carbamoyl phosphate + 2 ADP + phosphate + 2 H(+). It participates in amino-acid biosynthesis; L-arginine biosynthesis; carbamoyl phosphate from bicarbonate: step 1/1. Its function is as follows. Large subunit of the arginine-specific carbamoyl phosphate synthase (CPSase). CPSase catalyzes the formation of carbamoyl phosphate from the ammonia moiety of glutamine, hydrogencarbonate, and phosphate donated by ATP, the first step of the arginine biosynthetic pathway. The large subunit (synthetase) binds the substrates ammonia (free or transferred from glutamine from the small subunit), hydrogencarbonate and ATP and carries out an ATP-coupled ligase reaction, activating hydrogencarbonate by forming carboxy phosphate which reacts with ammonia to form carbamoyl phosphate. This is Carbamoyl phosphate synthase arginine-specific large chain, mitochondrial (arg-3) from Neurospora crassa (strain ATCC 24698 / 74-OR23-1A / CBS 708.71 / DSM 1257 / FGSC 987).